An 809-amino-acid polypeptide reads, in one-letter code: MSKTVNFRATKNFYLQFVSVSSRDTSCIPCIHLFFDSKRYVFGSVGEGCQRAILSQQLRLSKIKDVFLMQGSSISSPDTYDSSSSSSTTSVSDMLQLDDRDKVIVSERNSMCSTVNYPTWWDSCGGFPGFLLSLNDISEPGETGEASPFVLHGPSEVHQFLSSMRHFTYHTNVNLTVQGYTSAEAPVFVDENICVTPVVVSLVKNSFKKRKHENINRGTNARPLKEDRANTSPHWYSHVSNDTSFVVENAMYNTPAPLEPDKPELFISYIVQSHPTPGKFDAAKAKSLGITKGLDCGRLARGEPVTLENGKTVYPKEVIGPSIPGSSFFIIHCPNELVIDLVIENHKWTNAPKPVCVIHSVTPEVYKNPRYQSWISSFPSEVSHLIASTEVNEVINYPRSAVAIATLNLLDSKVFPLGFNCYEVKNVQKNNRIAFAKPKLRFAFGKKTGIDDSEVGVSIEELKDKILKEKPDYKSFVEEAQKYVSDKPKAPSFAGSDIQICTLGTGSAMPSLYRNVSSTYVRIPVDKKCMEDSAISMKNILLDCGEGTLGRLSRQYGDNLKYEIASLRWIYISHMHADHHAGVIGVLKAWTKYSDGRSKLFITAPPQFEFWLLEYSRIDYLPLSNIVFISNSALRTDRKPSALESSRLSSLFKEFDLVSFRTVPAIHCPYSYCMEITNSSGWKIAYSGDTRPSEDFANIAKDSTLLIHEATLEDSMHEIAIKKQHSTYSEALEVAKKAGTKNVILTHFSQRYPKLPDIDISTEDLHIALAFDGMTLKISDISLFRYFGKPLAYLFNEENLKEESDPLKF.

The tract at residues 74–93 is disordered; it reads ISSPDTYDSSSSSSTTSVSD.

Belongs to the RNase Z family. The cofactor is Zn(2+).

The protein localises to the nucleus. It localises to the cytoplasm. The catalysed reaction is Endonucleolytic cleavage of RNA, removing extra 3' nucleotides from tRNA precursor, generating 3' termini of tRNAs. A 3'-hydroxy group is left at the tRNA terminus and a 5'-phosphoryl group is left at the trailer molecule.. Its function is as follows. Zinc phosphodiesterase, which displays some tRNA 3'-processing endonuclease activity. May be involved in tRNA maturation, by removing a 3'-trailer from precursor tRNA. The chain is Ribonuclease Z 1 (trz1) from Schizosaccharomyces pombe (strain 972 / ATCC 24843) (Fission yeast).